Here is a 461-residue protein sequence, read N- to C-terminus: Steroidogenic factor 1 (461 aa).

The segment at residues 10 to 85 (DELCPVCGDK…VGMRLEAVRA (76 aa)) is a DNA-binding region (nuclear receptor). Residues 13–33 (CPVCGDKVSGYHYGLLTCESC) form an NR C4-type zinc finger. Residues Lys-34, Lys-38, and Lys-72 each carry the N6-acetyllysine modification. The segment at 49–73 (CTESQSCKIDKTQRKRCPFCRFQKC) adopts an NR C4-type zinc-finger fold. The disordered stretch occupies residues 116–158 (NGFKLETGPPVGVPPPPPPPPDYMLPHGLHASEPKGLASGPPA). Residue Lys-119 forms a Glycyl lysine isopeptide (Lys-Gly) (interchain with G-Cter in SUMO) linkage. Residues 126 to 138 (VGVPPPPPPPPDY) are compositionally biased toward pro residues. Lys-194 participates in a covalent cross-link: Glycyl lysine isopeptide (Lys-Gly) (interchain with G-Cter in SUMO). Residue Ser-203 is modified to Phosphoserine; by CDK7. In terms of domain architecture, NR LBD spans 222–459 (GVPELILQLL…NLLIEMLQAK (238 aa)). Residues 230–461 (LLQLEPDEDQ…LIEMLQAKQT (232 aa)) form an important for dimerization region. Residues Gly-341, Tyr-436, and Lys-440 each coordinate a 1,2-diacyl-sn-glycero-3-phosphocholine.

Belongs to the nuclear hormone receptor family. NR5 subfamily. In terms of assembly, binds DNA as a monomer. Part of a complex consisting of SFPQ, NONO and NR5A1. Interacts with NR0B2. Interacts with DGKQ and CDK7. Binds to and activated by HIPK3. In terms of processing, may be regulated by phosphorylation and dephosphorylation. Post-translationally, acetylation stimulates the transcriptional activity. Sumoylation reduces CDK7-mediated phosphorylation on Ser-203. In terms of processing, phosphorylated on Ser-203 by CDK7. This phosphorylation promotes transcriptional activity. Adrenal, ovary, testis, placenta, adipocyte, and brain.

The protein localises to the nucleus. Its function is as follows. Transcriptional activator. Seems to be essential for sexual differentiation and formation of the primary steroidogenic tissues. Binds to the Ad4 site found in the promoter region of steroidogenic P450 genes such as CYP11A, CYP11B and CYP21B. Also regulates the AMH/Muellerian inhibiting substance gene as well as the AHCH and STAR genes. 5'-YCAAGGYC-3' and 5'-RRAGGTCA-3' are the consensus sequences for the recognition by NR5A1. The SFPQ-NONO-NR5A1 complex binds to the CYP17 promoter and regulates basal and cAMP-dependent transcriptional activity. Binds phospholipids with a phosphatidylinositol (PI) headgroup, in particular PI(3,4)P2 and PI(3,4,5)P3. Activated by the phosphorylation of NR5A1 by HIPK3 leading to increased steroidogenic gene expression upon cAMP signaling pathway stimulation. This is Steroidogenic factor 1 (NR5A1) from Bos taurus (Bovine).